Consider the following 1071-residue polypeptide: DNA-directed RNA polymerase subunit beta (1071 aa).

It belongs to the RNA polymerase beta chain family. In terms of assembly, in plastids the minimal PEP RNA polymerase catalytic core is composed of four subunits: alpha, beta, beta', and beta''. When a (nuclear-encoded) sigma factor is associated with the core the holoenzyme is formed, which can initiate transcription.

The protein localises to the plastid. The protein resides in the chloroplast. The enzyme catalyses RNA(n) + a ribonucleoside 5'-triphosphate = RNA(n+1) + diphosphate. DNA-dependent RNA polymerase catalyzes the transcription of DNA into RNA using the four ribonucleoside triphosphates as substrates. The chain is DNA-directed RNA polymerase subunit beta from Acorus gramineus (Dwarf sweet flag).